We begin with the raw amino-acid sequence, 347 residues long: Protease HtpX homolog (347 aa).

A run of 4 helical transmembrane segments spans residues 8-28 (VALG…ATIA), 44-64 (AMAL…YLFV), 76-96 (LSFL…TYFA), and 141-163 (AFAY…LALT). His-174 serves as a coordination point for Zn(2+). Residue Glu-175 is part of the active site. Residue His-178 coordinates Zn(2+). A run of 2 helical transmembrane segments spans residues 185–205 (AIML…VTAV) and 221–241 (ILAA…LLVL). Position 248 (Glu-248) interacts with Zn(2+).

The protein belongs to the peptidase M48B family. Requires Zn(2+) as cofactor.

It is found in the cell membrane. The chain is Protease HtpX homolog from Pyrobaculum aerophilum (strain ATCC 51768 / DSM 7523 / JCM 9630 / CIP 104966 / NBRC 100827 / IM2).